The chain runs to 254 residues: 5-oxoprolinase subunit A (254 aa).

It belongs to the LamB/PxpA family. In terms of assembly, forms a complex composed of PxpA, PxpB and PxpC.

It catalyses the reaction 5-oxo-L-proline + ATP + 2 H2O = L-glutamate + ADP + phosphate + H(+). Functionally, catalyzes the cleavage of 5-oxoproline to form L-glutamate coupled to the hydrolysis of ATP to ADP and inorganic phosphate. In Acinetobacter baumannii (strain AB307-0294), this protein is 5-oxoprolinase subunit A.